A 207-amino-acid chain; its full sequence is Hemin/hemoglobin-binding protein 1 (207 aa).

The signal sequence occupies residues 1 to 27 (MKKVLVFAAFIVLFSFSFLSTGLTAQA). One can recognise an NEAT domain in the interval 29–148 (LKDGTYSVDY…RFDEGSAKAL (120 aa)). The disordered stretch occupies residues 151–178 (AVKSSDNNTTTPATKSDSSNKVTNPKSS). The segment covering 154-178 (SSDNNTTTPATKSDSSNKVTNPKSS) has biased composition (polar residues). The NPKXZ sorting signal signature appears at 174-178 (NPKSS). A Murein peptidoglycan amidated serine modification is found at S177. Positions 178-207 (SDSSQMFLYGIIFVATGAGLILLKRRAIFK) are cleaved as a propeptide — removed by sortase B.

It localises to the secreted. Its subcellular location is the cell wall. Functionally, binds both host hemin and hemoglobin with affinity in the nanomolar range and presumably directs it to membrane transporters. The protein is Hemin/hemoglobin-binding protein 1 of Listeria monocytogenes serovar 1/2a (strain ATCC BAA-679 / EGD-e).